Here is a 198-residue protein sequence, read N- to C-terminus: Heat shock 70 kDa protein (198 aa).

The segment covering 170–191 (GGGVPSGMPGGMPGAGGGGGKG) has biased composition (gly residues). The interval 170-198 (GGGVPSGMPGGMPGAGGGGGKGPTIEEVD) is disordered.

The protein belongs to the heat shock protein 70 family.

This Schistosoma japonicum (Blood fluke) protein is Heat shock 70 kDa protein.